The chain runs to 581 residues: Frizzled-8 (581 aa).

A signal peptide spans 1–23; sequence MESLSLSLLLLVSWLQGSQCAAA. One can recognise an FZ domain in the interval 24-144; that stretch reads KELSCQEITV…GNPDTLCMDY (121 aa). The Extracellular portion of the chain corresponds to 24–239; that stretch reads KELSCQEITV…PEERTFTEFW (216 aa). Cystine bridges form between cysteine 28-cysteine 89, cysteine 36-cysteine 82, cysteine 73-cysteine 111, cysteine 100-cysteine 141, and cysteine 104-cysteine 128. Asparagine 42 carries N-linked (GlcNAc...) asparagine glycosylation. 64–71 contacts hexadecanoate; the sequence is QFWPLVVI. Residues 88 to 93 form a wnt-binding region; that stretch reads ICLEDY. The wnt-binding stretch occupies residues 140 to 146; it reads LCMDYYN. A glycan (N-linked (GlcNAc...) asparagine) is linked at asparagine 146. Residues 151–189 are disordered; sequence TTAAPSHPEPPKPPARSVPKGRTRVEPPRSRSRATGCES. Positions 157-166 are enriched in pro residues; it reads HPEPPKPPAR. Residues 240–260 traverse the membrane as a helical segment; that stretch reads IGLWSVLCFASTFATVSTFLI. Over 261–271 the chain is Cytoplasmic; that stretch reads DMERFKYPERP. Residues 272–292 traverse the membrane as a helical segment; sequence IIFLSACYLLVSTGYLIRLIA. The Extracellular portion of the chain corresponds to 293 to 320; it reads GHEKVACSRGELDLEHIIHYETTGPALC. The helical transmembrane segment at 321-341 threads the bilayer; sequence TLVFLLIYFFGMASSIWWVIL. Over 342-377 the chain is Cytoplasmic; it reads SLTWFLAAGMKWGNEAIAGYSQYFHLAAWLVPSIKS. A helical transmembrane segment spans residues 378 to 398; it reads IAVLALSSVDGDPVAGICFVG. At 399-407 the chain is on the extracellular side; it reads NQNLDNLRG. The helical transmembrane segment at 408–428 threads the bilayer; that stretch reads FVLAPLVIYLFIGSMFLLAGF. Residues 429–454 are Cytoplasmic-facing; it reads VSLFRIRSVIKQGGTKTDKLEKLMIR. A helical membrane pass occupies residues 455–475; it reads IGIFSVLYTVPATIVVACFFY. Residues 476–505 are Extracellular-facing; sequence EQHNRQGWEVAHNCNSCQPEMAQPHRPDYA. A helical transmembrane segment spans residues 506 to 526; that stretch reads VFMLKYFMCLVVGITSGVWIW. Residues 527-581 lie on the Cytoplasmic side of the membrane; the sequence is SGKTLESWRAFCTRCCWGSKATGGSMYSDVSTGLTWRSGTGSSVSCPKQMPLSQV. A Lys-Thr-X-X-X-Trp motif, mediates interaction with the PDZ domain of Dvl family members motif is present at residues 529–534; that stretch reads KTLESW. The PDZ-binding signature appears at 579–581; that stretch reads SQV.

This sequence belongs to the G-protein coupled receptor Fz/Smo family. In terms of assembly, interacts with lypd6 and the interaction is strongly enhanced by wnt3a.

It is found in the membrane. The protein resides in the cell membrane. Its function is as follows. Receptor for Wnt proteins. Most of frizzled receptors are coupled to the beta-catenin canonical signaling pathway, which leads to the activation of disheveled proteins, inhibition of GSK-3 kinase, nuclear accumulation of beta-catenin and activation of Wnt target genes. A second signaling pathway involving PKC and calcium fluxes has been seen for some family members, but it is not yet clear if it represents a distinct pathway or if it can be integrated in the canonical pathway, as PKC seems to be required for Wnt-mediated inactivation of GSK-3 kinase. Both pathways seem to involve interactions with G-proteins. May be involved in transduction and intercellular transmission of polarity information during tissue morphogenesis and/or in differentiated tissues. Activation by Wnt8, Wnt5A or Wnt3A induces expression of beta-catenin target genes. Displays an axis-inducing activity. This chain is Frizzled-8 (fzd8), found in Xenopus laevis (African clawed frog).